The following is a 1022-amino-acid chain: D-2-hydroxyglutarate dehydrogenase (1022 aa).

The FAD-binding PCMH-type domain maps to 53–286 (YQLLPDAVLF…SEARLDITPL (234 aa)). Positions 407 and 505 each coordinate (R)-2-hydroxyglutarate. Positions 667–700 (FSHEVKEAMSGCLACKACSTQCPIKIDVPAFRSR) constitute a 4Fe-4S ferredoxin-type domain. Residues Cys678, Cys681, Cys684, and Cys688 each contribute to the [4Fe-4S] cluster site.

The protein in the N-terminal section; belongs to the FAD-binding oxidoreductase/transferase type 4 family. In terms of assembly, homotetramer. It depends on [4Fe-4S] cluster as a cofactor. FAD is required as a cofactor.

The enzyme catalyses (R)-2-hydroxyglutarate + A = 2-oxoglutarate + AH2. With respect to regulation, activity is completely inhibited by the addition of 0.5 mM Mn(2+), Ni(2+), or Co(2+) and partially inhibited by 0.5 mM Zn(2+). Catalyzes the oxidation of D-2-hydroxyglutarate (D-2-HGA) to 2-oxoglutarate. Appears to be the only D2HGDH in P.ananatis, providing the way to recycle D-2-HGA produced during L-serine synthesis by SerA, by converting it back to 2-oxoglutarate. Is involved in the utilization of D-2-HGA, that can support the growth of P.ananatis as a sole carbon source, although it barely serves as a good substrate. The physiological molecule that functions as the primary electron acceptor during D-2-HGA oxidation by YdiJ in P.ananatis is unknown. Shows strict substrate specificity towards D-2-HGA, since it has no detectable activity on L-2-hydroxyglutarate, L-malate, D-malate, L-lactate, D-lactate, L-tartrate, D-tartrate, L-glycerate, D-glycerate, glutarate, or pyruvate. The chain is D-2-hydroxyglutarate dehydrogenase from Pantoea ananatis (strain AJ13355).